The following is an 873-amino-acid chain: DNA mismatch repair protein MutS (873 aa).

ATP is bound at residue 620-627 (GPNMAGKS).

This sequence belongs to the DNA mismatch repair MutS family.

This protein is involved in the repair of mismatches in DNA. It is possible that it carries out the mismatch recognition step. This protein has a weak ATPase activity. The protein is DNA mismatch repair protein MutS of Ruminiclostridium cellulolyticum (strain ATCC 35319 / DSM 5812 / JCM 6584 / H10) (Clostridium cellulolyticum).